The following is a 100-amino-acid chain: Large ribosomal subunit protein uL23 (100 aa).

It belongs to the universal ribosomal protein uL23 family. In terms of assembly, part of the 50S ribosomal subunit. Contacts protein L29, and trigger factor when it is bound to the ribosome.

Its function is as follows. One of the early assembly proteins it binds 23S rRNA. One of the proteins that surrounds the polypeptide exit tunnel on the outside of the ribosome. Forms the main docking site for trigger factor binding to the ribosome. This chain is Large ribosomal subunit protein uL23, found in Prochlorococcus marinus subsp. pastoris (strain CCMP1986 / NIES-2087 / MED4).